Here is a 63-residue protein sequence, read N- to C-terminus: Putative ankyrin repeat protein RF_p14 (63 aa).

2 ANK repeats span residues 11 to 43 (KLNQ…CRDH) and 44 to 63 (QGDT…ILDI).

The chain is Putative ankyrin repeat protein RF_p14 from Rickettsia felis (strain ATCC VR-1525 / URRWXCal2) (Rickettsia azadi).